A 1008-amino-acid chain; its full sequence is PWWP domain-containing protein 3 (1008 aa).

Residues 78–122 (VSSLLKLKEDVEEEEEEEEEEEEEEEDGEDEEEEEEEEEEEEEEE) adopt a coiled-coil conformation. The interval 84 to 124 (LKEDVEEEEEEEEEEEEEEEDGEDEEEEEEEEEEEEEEEHG) is disordered. Residues 87–122 (DVEEEEEEEEEEEEEEEDGEDEEEEEEEEEEEEEEE) are compositionally biased toward acidic residues. The 62-residue stretch at 127–188 (VGDFVWGKIK…ASQLKPFAES (62 aa)) folds into the PWWP domain. 3 disordered regions span residues 307–339 (EYHE…GLQW), 399–606 (ETEP…LGQE), and 668–874 (NHKF…GPGS). The segment covering 321–330 (NNDDDDDDEE) has biased composition (acidic residues). The segment covering 399–409 (ETEPADGDVKS) has biased composition (basic and acidic residues). Residues 473 to 490 (DDGDDDGSGDKEESEEKE) show a composition bias toward acidic residues. Composition is skewed to basic and acidic residues over residues 511-522 (RFDDSVVERSTE), 677-687 (SSDKEKEELSE), and 707-725 (QKAE…TDKH). Positions 726-738 (GKMKKERKRKKSE) are enriched in basic residues. Composition is skewed to basic and acidic residues over residues 739-758 (SKKE…ESTK), 768-787 (SKKQ…ESTK), and 794-818 (NPES…ESTK). Short sequence motifs (nuclear localization signal) lie at residues 786–793 (TKKERKRK), 809–816 (TRKESVES), and 841–848 (EKKKKKKR). Residues 804 to 824 (VEEEETRKESVESTKKERKRK) are a coiled coil. The segment covering 842-854 (KKKKKKREGKSKK) has biased composition (basic residues).

It belongs to the PDP family. As to quaternary structure, interacts with DEK3. Binds to LHP1, MSI4/FVE and MSI5. Component of the PRC2 (polycomb repressive complex 2) complex which regulates histone methylation on histone H3K27.

The protein localises to the nucleus. Together with PDP1, PDP2 and PDP6, interacts with MSI4/FVE and MSI5 to suppress FLC, MAF4 and MAF5 expression by regulating the function of the PRC2 complex and modulating H3K27me3 level, thereby promoting flowering. This is PWWP domain-containing protein 3 from Arabidopsis thaliana (Mouse-ear cress).